Consider the following 453-residue polypeptide: Ethanolamine ammonia-lyase large subunit (453 aa).

Residues 160-162 (RLQ) and asparagine 193 each bind substrate. Positions 194 and 246 each coordinate adenosylcob(III)alamin. Glutamate 287 serves as a coordination point for substrate. Residue serine 295 participates in adenosylcob(III)alamin binding. Position 362 (aspartate 362) interacts with substrate. An adenosylcob(III)alamin-binding site is contributed by methionine 401.

This sequence belongs to the EutB family. The basic unit is a heterodimer which dimerizes to form tetramers. The heterotetramers trimerize; 6 large subunits form a core ring with 6 small subunits projecting outwards. It depends on adenosylcob(III)alamin as a cofactor.

It is found in the bacterial microcompartment. The enzyme catalyses ethanolamine = acetaldehyde + NH4(+). Its pathway is amine and polyamine degradation; ethanolamine degradation. Catalyzes the deamination of various vicinal amino-alcohols to oxo compounds. Allows this organism to utilize ethanolamine as the sole source of nitrogen and carbon in the presence of vitamin B12. In Escherichia coli O157:H7, this protein is Ethanolamine ammonia-lyase large subunit.